The primary structure comprises 447 residues: Maintenance of mitochondrial morphology protein 1 (447 aa).

The Lumenal portion of the chain corresponds to M1–G109. Residues L110 to F130 form a helical membrane-spanning segment. Topologically, residues S131–L447 are cytoplasmic. The region spanning S208–P421 is the SMP-LTD domain.

Belongs to the MMM1 family. Homodimer. Component of the ER-mitochondria encounter structure (ERMES) or MDM complex, composed of MMM1, MDM10, MDM12 and MDM34. An MMM1 homodimer associates with one molecule of MDM12 on each side in a pairwise head-to-tail manner, and the SMP-LTD domains of MMM1 and MDM12 generate a continuous hydrophobic tunnel for phospholipid trafficking.

It localises to the endoplasmic reticulum membrane. In terms of biological role, component of the ERMES/MDM complex, which serves as a molecular tether to connect the endoplasmic reticulum (ER) and mitochondria. Components of this complex are involved in the control of mitochondrial shape and protein biogenesis, and function in nonvesicular lipid trafficking between the ER and mitochondria. The MDM12-MMM1 subcomplex functions in the major beta-barrel assembly pathway that is responsible for biogenesis of all outer membrane beta-barrel proteins, and acts in a late step after the SAM complex. The MDM10-MDM12-MMM1 subcomplex further acts in the TOM40-specific pathway after the action of the MDM12-MMM1 complex. Essential for establishing and maintaining the structure of mitochondria and maintenance of mtDNA nucleoids. The protein is Maintenance of mitochondrial morphology protein 1 of Lachancea thermotolerans (strain ATCC 56472 / CBS 6340 / NRRL Y-8284) (Yeast).